The sequence spans 176 residues: Ribosome maturation factor RimM (176 aa).

The PRC barrel domain occupies Glu-97 to Phe-176.

This sequence belongs to the RimM family. In terms of assembly, binds ribosomal protein uS19.

It is found in the cytoplasm. Functionally, an accessory protein needed during the final step in the assembly of 30S ribosomal subunit, possibly for assembly of the head region. Essential for efficient processing of 16S rRNA. May be needed both before and after RbfA during the maturation of 16S rRNA. It has affinity for free ribosomal 30S subunits but not for 70S ribosomes. In Shewanella putrefaciens (strain CN-32 / ATCC BAA-453), this protein is Ribosome maturation factor RimM.